Reading from the N-terminus, the 189-residue chain is Parkinson disease protein 7 homolog (189 aa).

Residue alanine 2 is modified to N-acetylalanine. S-palmitoyl cysteine attachment occurs at residues cysteine 46 and cysteine 53. Tyrosine 67 is modified (phosphotyrosine). The Nucleophile role is filled by cysteine 106. Position 106 is a cysteine sulfinic acid (-SO2H); alternate (cysteine 106). Cysteine 106 carries the S-palmitoyl cysteine; alternate lipid modification. Residue histidine 126 is part of the active site. Lysine 130 participates in a covalent cross-link: Glycyl lysine isopeptide (Lys-Gly) (interchain with G-Cter in SUMO). An N6-acetyllysine modification is found at lysine 148. At lysine 182 the chain carries N6-succinyllysine.

Belongs to the peptidase C56 family. In terms of assembly, homodimer. Binds EFCAB6/DJBP and PIAS2. Part of a ternary complex containing PARK7, EFCAB6/DJBP and AR. Interacts (via N-terminus) with OTUD7B. Interacts with BBS1, HIPK1, CLCF1 and MTERF. Forms a complex with PINK1 and PRKN. Interacts (via C-terminus) with NCF1; the interaction is enhanced by LPS and modulates NCF1 phosphorylation and membrane translocation. Interacts with NENF. Deglycase activity does not require glutathione as a cofactor, however, glycated glutathione constitutes a PARK7 substrate. serves as cofactor. Sumoylated on Lys-130 by PIAS2 or PIAS4; which is essential for cell-growth promoting activity and transforming activity. In terms of processing, undergoes cleavage of a C-terminal peptide and subsequent activation of protease activity in response to oxidative stress.

The protein resides in the cell membrane. It localises to the cytoplasm. It is found in the nucleus. Its subcellular location is the membrane raft. The protein localises to the mitochondrion. The protein resides in the endoplasmic reticulum. It carries out the reaction N(omega)-(1-hydroxy-2-oxopropyl)-L-arginyl-[protein] + H2O = lactate + L-arginyl-[protein] + H(+). It catalyses the reaction N(6)-(1-hydroxy-2-oxopropyl)-L-lysyl-[protein] + H2O = lactate + L-lysyl-[protein] + H(+). The enzyme catalyses S-(1-hydroxy-2-oxopropyl)-L-cysteinyl-[protein] + H2O = lactate + L-cysteinyl-[protein] + H(+). The catalysed reaction is N(omega)-(1-hydroxy-2-oxoethyl)-L-arginyl-[protein] + H2O = L-arginyl-[protein] + glycolate + H(+). It carries out the reaction N(6)-(1-hydroxy-2-oxoethyl)-L-lysyl-[protein] + H2O = glycolate + L-lysyl-[protein] + H(+). It catalyses the reaction S-(1-hydroxy-2-oxoethyl)-L-cysteinyl-[protein] + H2O = glycolate + L-cysteinyl-[protein] + H(+). The enzyme catalyses N(2)-(1-hydroxy-2-oxopropyl)-dGTP + H2O = lactate + dGTP + H(+). The catalysed reaction is N(2)-(1-hydroxy-2-oxopropyl)-GTP + H2O = lactate + GTP + H(+). It carries out the reaction N(2)-(1-hydroxy-2-oxopropyl)-GDP + H2O = lactate + GDP + H(+). It catalyses the reaction N(2)-(1-hydroxy-2-oxopropyl)-GMP + H2O = lactate + GMP + H(+). The enzyme catalyses N(2)-(1-hydroxy-2-oxoethyl)-dGTP + H2O = dGTP + glycolate + H(+). The catalysed reaction is N(2)-(1-hydroxy-2-oxoethyl)-GTP + H2O = glycolate + GTP + H(+). It carries out the reaction N(2)-(1-hydroxy-2-oxoethyl)-GDP + H2O = glycolate + GDP + H(+). It catalyses the reaction N(2)-(1-hydroxy-2-oxoethyl)-GMP + H2O = glycolate + GMP + H(+). The enzyme catalyses an N(2)-(1-hydroxy-2-oxopropyl)-guanosine in RNA + H2O = a guanosine in RNA + lactate + H(+). The catalysed reaction is an N(2)-(1-hydroxy-2-oxopropyl)-2'-deoxyguanosine in DNA + H2O = a 2'-deoxyguanosine in DNA + lactate + H(+). It carries out the reaction an N(2)-(1-hydroxy-2-oxoethyl)-guanosine in RNA + H2O = a guanosine in RNA + glycolate + H(+). It catalyses the reaction an N(2)-(1-hydroxy-2-oxoethyl)-2'-deoxyguanosine in DNA + H2O = a 2'-deoxyguanosine in DNA + glycolate + H(+). Functionally, multifunctional protein with controversial molecular function which plays an important role in cell protection against oxidative stress and cell death acting as oxidative stress sensor and redox-sensitive chaperone and protease. It is involved in neuroprotective mechanisms like the stabilization of NFE2L2 and PINK1 proteins, male fertility as a positive regulator of androgen signaling pathway as well as cell growth and transformation through, for instance, the modulation of NF-kappa-B signaling pathway. Has been described as a protein and nucleotide deglycase that catalyzes the deglycation of the Maillard adducts formed between amino groups of proteins or nucleotides and reactive carbonyl groups of glyoxals. But this function is rebuted by other works. As a protein deglycase, repairs methylglyoxal- and glyoxal-glycated proteins, and releases repaired proteins and lactate or glycolate, respectively. Deglycates cysteine, arginine and lysine residues in proteins, and thus reactivates these proteins by reversing glycation by glyoxals. Acts on early glycation intermediates (hemithioacetals and aminocarbinols), preventing the formation of advanced glycation endproducts (AGE) that cause irreversible damage. Also functions as a nucleotide deglycase able to repair glycated guanine in the free nucleotide pool (GTP, GDP, GMP, dGTP) and in DNA and RNA. Is thus involved in a major nucleotide repair system named guanine glycation repair (GG repair), dedicated to reversing methylglyoxal and glyoxal damage via nucleotide sanitization and direct nucleic acid repair. Protects histones from adduction by methylglyoxal, controls the levels of methylglyoxal-derived argininine modifications on chromatin. Able to remove the glycations and restore histone 3, histone glycation disrupts both local and global chromatin architecture by altering histone-DNA interactions as well as histone acetylation and ubiquitination levels. Displays a very low glyoxalase activity that may reflect its deglycase activity. Eliminates hydrogen peroxide and protects cells against hydrogen peroxide-induced cell death. Required for correct mitochondrial morphology and function as well as for autophagy of dysfunctional mitochondria. Plays a role in regulating expression or stability of the mitochondrial uncoupling proteins SLC25A14 and SLC25A27 in dopaminergic neurons of the substantia nigra pars compacta and attenuates the oxidative stress induced by calcium entry into the neurons via L-type channels during pacemaking. Regulates astrocyte inflammatory responses, may modulate lipid rafts-dependent endocytosis in astrocytes and neuronal cells. In pancreatic islets, involved in the maintenance of mitochondrial reactive oxygen species (ROS) levels and glucose homeostasis in an age- and diet dependent manner. Protects pancreatic beta cells from cell death induced by inflammatory and cytotoxic setting. Binds to a number of mRNAs containing multiple copies of GG or CC motifs and partially inhibits their translation but dissociates following oxidative stress. Metal-binding protein able to bind copper as well as toxic mercury ions, enhances the cell protection mechanism against induced metal toxicity. In macrophages, interacts with the NADPH oxidase subunit NCF1 to direct NADPH oxidase-dependent ROS production, and protects against sepsis. The sequence is that of Parkinson disease protein 7 homolog from Chlorocebus aethiops (Green monkey).